Reading from the N-terminus, the 471-residue chain is MNMANFLRGFEEKGIKNDRPEDQLSKEKKKILFSFCEVCNIQLNSAAQAQVHSNGKSHRKRVKQLSDGQPPPPAQASPSSNSSTGSTCHTTTLPALVRTPTLMMQPSLDIKPFMSFPVDSSSAVGLFPNFNTMDPVQKAVINHTFGVSIPPKKKQVISCNVCQLRFNSDSQAEAHYKGSKHAKKVKALDATKNKPKMVPSKDSAKANPSCSITPITGNNSDKSEDKGKLKASSSSQPSSSESGSFLLKSGTTPLPPGAATSPSKSTNGAPGTVVESEEEKAKKLLYCSLCKVAVNSLSQLEAHNTGSKHKTMVEARNGAGPIKSYPRPGSRLKMQNGSKGSGLQNKTFHCEICDVHVNSEIQLKQHISSRRHKDRVAGKPLKPKYSPYNKLQRSPSILAAKLAFQKDMMKPLAPAFLSSPLAAAAAVSSALSLPPRPSASLFQAPAIPPALLRPGHGPIRATPASILFAPY.

The interval methionine 1–leucine 93 is required for induction of apoptosis. A Matrin-type 1 zinc finger spans residues serine 34–glutamine 64. 2 disordered regions span residues glutamine 50–threonine 92 and histidine 175–glutamate 275. Low complexity predominate over residues alanine 76 to threonine 92. The interval proline 94–tyrosine 471 is interaction with p53/TP53. The Matrin-type 2 zinc finger occupies isoleucine 157–alanine 187. Residues alanine 206–serine 220 are compositionally biased toward polar residues. The segment covering lysine 230 to glycine 250 has biased composition (low complexity). Residues threonine 260–alanine 269 show a composition bias toward polar residues. The segment at lysine 282–arginine 316 adopts a Matrin-type 3 zinc-finger fold. Residues glycine 318–glycine 340 form a disordered region. The Matrin-type 4 zinc finger occupies phenylalanine 348–glycine 378.

Interacts with p53/TP53; the interaction is direct. As to expression, detected in germinal center of lymph node (at protein level). Expressed in spleen, lymph node and tonsil.

It is found in the nucleus. Functionally, may play a role in p53/TP53-mediated apoptosis. The polypeptide is Zinc finger protein 385B (ZNF385B) (Homo sapiens (Human)).